We begin with the raw amino-acid sequence, 199 residues long: N-(5'-phosphoribosyl)anthranilate isomerase (199 aa).

This sequence belongs to the TrpF family.

It carries out the reaction N-(5-phospho-beta-D-ribosyl)anthranilate = 1-(2-carboxyphenylamino)-1-deoxy-D-ribulose 5-phosphate. Its pathway is amino-acid biosynthesis; L-tryptophan biosynthesis; L-tryptophan from chorismate: step 3/5. In Streptococcus pneumoniae (strain ATCC 700669 / Spain 23F-1), this protein is N-(5'-phosphoribosyl)anthranilate isomerase.